Consider the following 361-residue polypeptide: tRNA-specific 2-thiouridylase MnmA (361 aa).

Residues 8–15 (AMSGGVDS) and Met34 each bind ATP. The active-site Nucleophile is Cys104. Cys104 and Cys202 are disulfide-bonded. Residue Gly128 coordinates ATP. The segment at 152–154 (KDQ) is interaction with tRNA. Cys202 functions as the Cysteine persulfide intermediate in the catalytic mechanism. The tract at residues 307 to 308 (RY) is interaction with tRNA.

The protein belongs to the MnmA/TRMU family.

It localises to the cytoplasm. The enzyme catalyses S-sulfanyl-L-cysteinyl-[protein] + uridine(34) in tRNA + AH2 + ATP = 2-thiouridine(34) in tRNA + L-cysteinyl-[protein] + A + AMP + diphosphate + H(+). Its function is as follows. Catalyzes the 2-thiolation of uridine at the wobble position (U34) of tRNA, leading to the formation of s(2)U34. In Caldicellulosiruptor saccharolyticus (strain ATCC 43494 / DSM 8903 / Tp8T 6331), this protein is tRNA-specific 2-thiouridylase MnmA.